A 1088-amino-acid polypeptide reads, in one-letter code: Protein argonaute 18 (1088 aa).

Positions methionine 1–proline 220 are disordered. 6 stretches are compositionally biased toward gly residues: residues glycine 20–arginine 30, tyrosine 51–arginine 86, glycine 95–histidine 127, glycine 135–tyrosine 148, alanine 161–glycine 182, and glycine 191–serine 206. Residues glutamine 211–proline 220 show a composition bias toward pro residues. Positions threonine 477 to proline 574 constitute a PAZ domain. Residues leucine 747–threonine 1056 form the Piwi domain.

The protein belongs to the argonaute family. Ago subfamily.

Functionally, probably involved in the RNA silencing pathway. May bind to short RNAs such as microRNAs (miRNAs) or short interfering RNAs (siRNAs), and represses the translation of mRNAs which are complementary to them. This Oryza sativa subsp. japonica (Rice) protein is Protein argonaute 18 (AGO18).